A 1070-amino-acid polypeptide reads, in one-letter code: Phosphatidylinositol 4,5-bisphosphate 3-kinase catalytic subunit beta isoform (1070 aa).

The PI3K-ABD domain maps to 26–115; it reads SDGSIPVDFL…LPVLKLVTRS (90 aa). The region spanning 194 to 285 is the PI3K-RBD domain; the sequence is GGKLIVAVHF…RALPHFILVE (92 aa). S324 is modified (phosphoserine). The 170-residue stretch at 327–496 folds into the C2 PI3K-type domain; sequence WENNNPFQIV…NATALHVKFP (170 aa). A Nuclear localization signal motif is present at residues 410 to 418; it reads KVKTKKSTK. In terms of domain architecture, PIK helical spans 524-701; it reads ANVSSRGGKK…GVILEAYCRG (178 aa). The PI3K/PI4K catalytic domain maps to 772–1053; that stretch reads YVEKCKYMDS…KFDEALRESW (282 aa). The interval 778-784 is G-loop; the sequence is YMDSKMK. The catalytic loop stretch occupies residues 916–924; the sequence is GIGDRHSDN. The segment at 935–961 is activation loop; it reads HIDFGHILGNFKSKFGIKRERVPFILT. S1070 bears the Phosphoserine; by autocatalysis mark.

The protein belongs to the PI3/PI4-kinase family. As to quaternary structure, heterodimer of a catalytic subunit PIK3CB and a p85 regulatory subunit (PIK3R1, PIK3R2 or PIK3R3). Interaction with PIK3R2 is required for nuclear localization and nuclear export. Part of a complex with PIK3R1 and PTEN. Binding to PTEN may antagonize the lipid kinase activity under normal growth conditions. Part of a complex involved in autophagosome formation composed of PIK3C3 and PIK3R4. Interacts with BECN1, ATG14 and RAB5A. Post-translationally, autophosphorylation at Ser-1070 negatively regulates the phosphatidylinositol-4,5-bisphosphate 3-kinase activity. In terms of tissue distribution, expressed ubiquitously.

It localises to the cytoplasm. The protein resides in the nucleus. It carries out the reaction a 1,2-diacyl-sn-glycero-3-phospho-(1D-myo-inositol-4,5-bisphosphate) + ATP = a 1,2-diacyl-sn-glycero-3-phospho-(1D-myo-inositol-3,4,5-trisphosphate) + ADP + H(+). It catalyses the reaction 1-octadecanoyl-2-(5Z,8Z,11Z,14Z)-eicosatetraenoyl-sn-glycero-3-phospho-1D-myo-inositol 4,5-bisphosphate + ATP = 1-octadecanoyl-2-(5Z,8Z,11Z,14Z-eicosatetraenoyl)-sn-glycero-3-phospho-(1D-myo-inositol 3,4,5-triphosphate) + ADP + H(+). The enzyme catalyses L-seryl-[protein] + ATP = O-phospho-L-seryl-[protein] + ADP + H(+). It participates in phospholipid metabolism; phosphatidylinositol phosphate biosynthesis. Its function is as follows. Phosphoinositide-3-kinase (PI3K) phosphorylates phosphatidylinositol derivatives at position 3 of the inositol ring to produce 3-phosphoinositides. Uses ATP and PtdIns(4,5)P2 (phosphatidylinositol 4,5-bisphosphate) to generate phosphatidylinositol 3,4,5-trisphosphate (PIP3). PIP3 plays a key role by recruiting PH domain-containing proteins to the membrane, including AKT1 and PDPK1, activating signaling cascades involved in cell growth, survival, proliferation, motility and morphology. Involved in the activation of AKT1 upon stimulation by G-protein coupled receptors (GPCRs) ligands such as CXCL12, sphingosine 1-phosphate, and lysophosphatidic acid. May also act downstream receptor tyrosine kinases. Required in different signaling pathways for stable platelet adhesion and aggregation. Plays a role in platelet activation signaling triggered by GPCRs, alpha-IIb/beta-3 integrins (ITGA2B/ ITGB3) and ITAM (immunoreceptor tyrosine-based activation motif)-bearing receptors such as GP6. Regulates the strength of adhesion of ITGA2B/ ITGB3 activated receptors necessary for the cellular transmission of contractile forces. Required for platelet aggregation induced by F2 (thrombin) and thromboxane A2 (TXA2). Has a role in cell survival. May have a role in cell migration. Involved in the early stage of autophagosome formation. Modulates the intracellular level of PtdIns3P (phosphatidylinositol 3-phosphate) and activates PIK3C3 kinase activity. May act as a scaffold, independently of its lipid kinase activity to positively regulate autophagy. May have a role in insulin signaling as scaffolding protein in which the lipid kinase activity is not required. May have a kinase-independent function in regulating cell proliferation and in clathrin-mediated endocytosis. Mediator of oncogenic signal in cell lines lacking PTEN. The lipid kinase activity is necessary for its role in oncogenic transformation. Required for the growth of ERBB2 and RAS driven tumors. Also has a protein kinase activity showing autophosphorylation. In Homo sapiens (Human), this protein is Phosphatidylinositol 4,5-bisphosphate 3-kinase catalytic subunit beta isoform (PIK3CB).